Reading from the N-terminus, the 223-residue chain is FAD-dependent monooxygenase imqC (223 aa).

FAD contacts are provided by residues 139-141 (RFY), Tyr189, and Asp210.

This sequence belongs to the PheA/TfdB FAD monooxygenase family.

The protein operates within secondary metabolite biosynthesis. FAD-dependent monooxygenase; part of the gene cluster that mediates the biosynthesis of imizoquins A to D, tripeptide-derived alkaloids that serve a protective role against oxidative stress that are essential for normal germination. ImqB is a canonical three-module NRPS that assembles the tripeptide backbone of the imizoquins via condensation of Trp, Tyr, and Leu-derived precursors. N-methylation by imqF and phenol oxidation by imqC, followed by cyclization via the FAD-dependent oxidase imqH carry out the three-step transformation of L-tyrosine into tetrahydroisoquinoline. Importantly, this sequence requires the presence of a free amine in the tyrosine moiety, indicating that isoquinoline formation occurs prior to peptide bond formation. The imidazolidin-4-one ring of imizoquins could form following additional oxidation of the methyl-derived bridgehead carbon by imqH. Lastly, O-methylation by imqG and leucine hydroxylation by imqE complete biosynthesis of the imizoquins. The protein is FAD-dependent monooxygenase imqC of Aspergillus flavus (strain ATCC 200026 / FGSC A1120 / IAM 13836 / NRRL 3357 / JCM 12722 / SRRC 167).